The following is a 103-amino-acid chain: Small ribosomal subunit protein uS10 (103 aa).

This sequence belongs to the universal ribosomal protein uS10 family. Part of the 30S ribosomal subunit.

In terms of biological role, involved in the binding of tRNA to the ribosomes. The protein is Small ribosomal subunit protein uS10 of Pelodictyon phaeoclathratiforme (strain DSM 5477 / BU-1).